Reading from the N-terminus, the 264-residue chain is Small ribosomal subunit protein uS2 (264 aa).

Belongs to the universal ribosomal protein uS2 family.

The protein is Small ribosomal subunit protein uS2 of Helicobacter pylori (strain Shi470).